Consider the following 675-residue polypeptide: Protein kintoun (675 aa).

Disordered regions lie at residues A98–A131, A265–P293, E310–K340, and E509–T659. Basic and acidic residues predominate over residues Q102–Q113. Residues V279–P293 show a composition bias toward low complexity. The segment covering A529–A543 has biased composition (low complexity). Acidic residues predominate over residues S544–E553. The span at D564–G577 shows a compositional bias: low complexity. Residues E579–Q596 are compositionally biased toward basic and acidic residues. Low complexity-rich tracts occupy residues A604–E617 and V628–T659.

The protein belongs to the PIH1 family. Kintoun subfamily.

Its subcellular location is the cytoplasm. Required for cytoplasmic pre-assembly of axonemal dyneins, thereby playing a central role in motility in cilia and flagella. Involved in pre-assembly of dynein arm complexes in the cytoplasm before intraflagellar transport loads them for the ciliary compartment. The polypeptide is Protein kintoun (pf13) (Chlamydomonas reinhardtii (Chlamydomonas smithii)).